Reading from the N-terminus, the 150-residue chain is Globin-1 (150 aa).

The Globin domain occupies 11-150 (ALTAAEKATI…MICILLRSSY (140 aa)). Positions 74 and 106 each coordinate heme b.

This sequence belongs to the globin family. As to quaternary structure, monomer.

This is Globin-1 from Petromyzon marinus (Sea lamprey).